We begin with the raw amino-acid sequence, 364 residues long: Paraneoplastic antigen Ma2 homolog (364 aa).

An N-acetylalanine modification is found at Ala-2. Residues 335–353 are compositionally biased toward acidic residues; sequence EEEEASFENESIEEPEEGD. Positions 335 to 364 are disordered; the sequence is EEEEASFENESIEEPEEGDGYGRWNHEGDD.

It belongs to the PNMA family.

Its subcellular location is the nucleus. The protein localises to the nucleolus. The polypeptide is Paraneoplastic antigen Ma2 homolog (PNMA2) (Pongo abelii (Sumatran orangutan)).